Reading from the N-terminus, the 166-residue chain is Vasopressin-neurophysin 2-copeptin (166 aa).

A signal peptide spans 1–19 (MPDATLPACFLGLLALTSA). Cys20 and Cys25 are joined by a disulfide. Gly28 is subject to Glycine amide. 7 cysteine pairs are disulfide-bonded: Cys41/Cys85, Cys44/Cys58, Cys52/Cys75, Cys59/Cys65, Cys92/Cys104, Cys98/Cys116, and Cys105/Cys110. Residue Asn133 is glycosylated (N-linked (GlcNAc...) asparagine).

It belongs to the vasopressin/oxytocin family. As to quaternary structure, interacts with vasopressin receptors V1bR/AVPR1B (Ki=85 pM), V1aR/AVPR1A (Ki=0.6 nM) and V2R/AVPR2 (Ki=4.9 nM). Interacts with oxytocin receptor (OXTR) (Ki=110 nM). A shorter neurophysin molecule (32-123) is called neurophysin-I and is derived from the complete protein (called neurophysin III) by proteolytic degradation (in vivo or after extraction).

The protein localises to the secreted. Neurophysin 2 specifically binds vasopressin. Functionally, vasopressin has a direct antidiuretic action on the kidney, it also causes vasoconstriction of the peripheral vessels. Acts by binding to vasopressin receptors (V1bR/AVPR1B, V1aR/AVPR1A, and V2R/AVPR2). This Sus scrofa (Pig) protein is Vasopressin-neurophysin 2-copeptin (AVP).